The primary structure comprises 110 residues: Ferredoxin (110 aa).

4Fe-4S ferredoxin-type domains are found at residues 2-30 (TYIV…YEGE) and 31-60 (FMLV…PESP). The [3Fe-4S] cluster site is built by C9 and C17. C21, C40, C43, and C46 together coordinate [4Fe-4S] cluster. C50 lines the [3Fe-4S] cluster pocket.

The cofactor is [4Fe-4S] cluster. [3Fe-4S] cluster serves as cofactor.

Functionally, ferredoxins are iron-sulfur proteins that transfer electrons in a wide variety of metabolic reactions. The sequence is that of Ferredoxin (fdxA) from Rickettsia typhi (strain ATCC VR-144 / Wilmington).